Reading from the N-terminus, the 30-residue chain is Mejucin (30 aa).

Its subcellular location is the secreted. In terms of biological role, bacteriocin that inhibits the growth of several Gram-positive bacteria, especially the food-borne pathogens L.monocytogenes, B.cereus strain ATCC 11778, B.cereus strain ATCC 21366, B.cereus strain ATCC 10876 and B.cereus strain ATCC 14579. Likely to act by disrupting the pathogen membrane resulting in leakage of intracellular constituents. Does not inhibit the growth of Gram-negative bacteria. This is Mejucin from Bacillus subtilis.